The chain runs to 220 residues: Octanoyltransferase (220 aa).

The 182-residue stretch at 27–208 folds into the BPL/LPL catalytic domain; that stretch reads PGTADEIWLC…QLARAHGHAV (182 aa). Residues 66 to 73, 139 to 141, and 152 to 154 contribute to the substrate site; these read RGGQVTYH, ALG, and GLA. Cys170 functions as the Acyl-thioester intermediate in the catalytic mechanism.

The protein belongs to the LipB family.

Its subcellular location is the cytoplasm. It carries out the reaction octanoyl-[ACP] + L-lysyl-[protein] = N(6)-octanoyl-L-lysyl-[protein] + holo-[ACP] + H(+). Its pathway is protein modification; protein lipoylation via endogenous pathway; protein N(6)-(lipoyl)lysine from octanoyl-[acyl-carrier-protein]: step 1/2. In terms of biological role, catalyzes the transfer of endogenously produced octanoic acid from octanoyl-acyl-carrier-protein onto the lipoyl domains of lipoate-dependent enzymes. Lipoyl-ACP can also act as a substrate although octanoyl-ACP is likely to be the physiological substrate. The chain is Octanoyltransferase from Bordetella parapertussis (strain 12822 / ATCC BAA-587 / NCTC 13253).